We begin with the raw amino-acid sequence, 736 residues long: Catalase-peroxidase 2 (736 aa).

A signal peptide spans 1–23; that stretch reads MIKKTLPVLILLALSGSFSTAVA. The segment at residues 102–223 is a cross-link (tryptophyl-tyrosyl-methioninium (Trp-Tyr) (with M-249)); the sequence is WHGAGTYRTY…LAATQMGLIY (122 aa). Catalysis depends on H103, which acts as the Proton acceptor. The segment at residues 223–249 is a cross-link (tryptophyl-tyrosyl-methioninium (Tyr-Met) (with W-102)); the sequence is YVNPEGPGGKPDPLASAKDIREAFSRM. H264 lines the heme b pocket.

It belongs to the peroxidase family. Peroxidase/catalase subfamily. In terms of assembly, homodimer or homotetramer. The cofactor is heme b. Post-translationally, formation of the three residue Trp-Tyr-Met cross-link is important for the catalase, but not the peroxidase activity of the enzyme.

The protein localises to the periplasm. The enzyme catalyses H2O2 + AH2 = A + 2 H2O. It carries out the reaction 2 H2O2 = O2 + 2 H2O. In terms of biological role, bifunctional enzyme with both catalase and broad-spectrum peroxidase activity. This Escherichia coli O157:H7 protein is Catalase-peroxidase 2.